Consider the following 126-residue polypeptide: Transcription antitermination protein NusB (126 aa).

It belongs to the NusB family.

Functionally, involved in transcription antitermination. Required for transcription of ribosomal RNA (rRNA) genes. Binds specifically to the boxA antiterminator sequence of the ribosomal RNA (rrn) operons. The protein is Transcription antitermination protein NusB of Oceanobacillus iheyensis (strain DSM 14371 / CIP 107618 / JCM 11309 / KCTC 3954 / HTE831).